The following is a 125-amino-acid chain: Small ribosomal subunit protein eS8 (125 aa).

The interval 1–34 (MQWQGRSVRKSTGGRYSPSRGKRRREIGSAPAET) is disordered.

The protein belongs to the eukaryotic ribosomal protein eS8 family. In terms of assembly, part of the 30S ribosomal subunit.

In Methanospirillum hungatei JF-1 (strain ATCC 27890 / DSM 864 / NBRC 100397 / JF-1), this protein is Small ribosomal subunit protein eS8.